A 172-amino-acid chain; its full sequence is AIG2-like protein C (172 aa).

Residue 13-18 (YGSLQE) coordinates substrate. Glu81 acts as the Proton acceptor in catalysis.

Belongs to the gamma-glutamylcyclotransferase family. As to expression, expressed in flowers, leaves, stems and roots.

In terms of biological role, putative gamma-glutamylcyclotransferase. The polypeptide is AIG2-like protein C (Arabidopsis thaliana (Mouse-ear cress)).